Reading from the N-terminus, the 475-residue chain is Coagulation factor X (475 aa).

A signal peptide spans 1–20 (MAGRLLLLLLCAALPDELRA). Residues 21–40 (EGGVFIKKESADKFLERTKR) constitute a propeptide that is removed on maturation. Residues 41–85 (ANSFLEEMKQGNIERECNEERCSKEEAREAFEDNEKTEEFWNIYV) enclose the Gla domain. Residues Glu-46, Glu-47, Glu-54, Glu-56, Glu-59, Glu-60, Glu-65, Glu-66, Glu-69, Glu-72, and Glu-79 each carry the 4-carboxyglutamate modification. Cys-57 and Cys-62 are disulfide-bonded. One can recognise an EGF-like 1; calcium-binding domain in the interval 86 to 122 (DGDQCSSNPCHYGGQCKDGLGSYTCSCLDGYQGKNCE). Cystine bridges form between Cys-90/Cys-101, Cys-95/Cys-110, Cys-112/Cys-121, Cys-129/Cys-140, Cys-136/Cys-152, Cys-154/Cys-167, Cys-175/Cys-348, Cys-247/Cys-252, Cys-267/Cys-283, Cys-396/Cys-410, and Cys-421/Cys-449. Asp-103 is subject to (3R)-3-hydroxyaspartate. An EGF-like 2 domain is found at 125–168 (IPKYCKINNGDCEQFCSIKKSVQKDVVCSCTSGYELAEDGKQCV). The propeptide at 186–240 (SVILPTNSNTNATSDQDVPSTNGSILEEVFTTTTESPTPPPRNGSSITDPNVDTR) is activation peptide. N-linked (GlcNAc...) asparagine glycosylation is found at Asn-196, Asn-207, and Asn-228. Residues 216–237 (TTTTESPTPPPRNGSSITDPNV) are disordered. One can recognise a Peptidase S1 domain in the interval 241–473 (IVGGDECRPG…FLRWVRTVMR (233 aa)). The Charge relay system role is filled by His-282. A glycan (N-linked (GlcNAc...) asparagine) is linked at Asn-285. The active-site Charge relay system is the Asp-328. The Charge relay system role is filled by Ser-425.

The protein belongs to the peptidase S1 family. The two chains are formed from a single-chain precursor by the excision of two Arg residues and are held together by 1 or more disulfide bonds. Post-translationally, the vitamin K-dependent, enzymatic carboxylation of some glutamate residues allows the modified protein to bind calcium. In terms of processing, the activation peptide is cleaved by factor IXa (in the intrinsic pathway), or by factor VIIa (in the extrinsic pathway). The iron and 2-oxoglutarate dependent 3-hydroxylation of aspartate and asparagine is (R) stereospecific within EGF domains. As to expression, liver and chorioallantoic membrane.

Its subcellular location is the secreted. It carries out the reaction Selective cleavage of Arg-|-Thr and then Arg-|-Ile bonds in prothrombin to form thrombin.. Functionally, factor Xa is a vitamin K-dependent glycoprotein that converts prothrombin to thrombin in the presence of factor Va, calcium and phospholipid during blood clotting. VAP cleaves the fusion proteins of Sendai virus, NDV, and influenza virus a at a specific single arginine-containing site, and plays a key role in the viral spreading in the allantoic sac. This is Coagulation factor X (F10) from Gallus gallus (Chicken).